The primary structure comprises 167 residues: NADH-quinone oxidoreductase subunit B 2 (167 aa).

[4Fe-4S] cluster is bound by residues cysteine 38, cysteine 39, cysteine 103, and cysteine 132.

It belongs to the complex I 20 kDa subunit family. NDH-1 is composed of 14 different subunits. Subunits NuoB, C, D, E, F, and G constitute the peripheral sector of the complex. The cofactor is [4Fe-4S] cluster.

Its subcellular location is the cell inner membrane. It catalyses the reaction a quinone + NADH + 5 H(+)(in) = a quinol + NAD(+) + 4 H(+)(out). NDH-1 shuttles electrons from NADH, via FMN and iron-sulfur (Fe-S) centers, to quinones in the respiratory chain. The immediate electron acceptor for the enzyme in this species is believed to be ubiquinone. Couples the redox reaction to proton translocation (for every two electrons transferred, four hydrogen ions are translocated across the cytoplasmic membrane), and thus conserves the redox energy in a proton gradient. This Rhizobium meliloti (strain 1021) (Ensifer meliloti) protein is NADH-quinone oxidoreductase subunit B 2.